The primary structure comprises 397 residues: DnaJ protein homolog 1 (397 aa).

One can recognise a J domain in the interval 1 to 52 (KNASPDDLKKAYRKAAIKNHPDKGGDPEKFKELAQAYDVLSDPEKREIYDQY). The CR-type zinc-finger motif lies at 114-198 (GTSKKLSLSR…CKGEKVVQEK (85 aa)). CXXCXGXG motif repeat units follow at residues 127–134 (CSKCNGKG), 143–150 (CASCQGSG), 170–177 (CNDCKGTG), and 186–193 (CPLCKGEK). Positions 367-397 (MRRKQHQHAQEAYDEDDEGHGGGQRVQCAQQ) are disordered. The residue at position 394 (Cys394) is a Cysteine methyl ester. The S-farnesyl cysteine moiety is linked to residue Cys394. Residues 395–397 (AQQ) constitute a propeptide, removed in mature form.

The protein localises to the membrane. In terms of biological role, plays a continuous role in plant development probably in the structural organization of compartments. The polypeptide is DnaJ protein homolog 1 (DNAJ1) (Allium porrum (Leek)).